Here is a 66-residue protein sequence, read N- to C-terminus: Large ribosomal subunit protein bL33c (66 aa).

Belongs to the bacterial ribosomal protein bL33 family.

It is found in the plastid. Its subcellular location is the chloroplast. This is Large ribosomal subunit protein bL33c from Carica papaya (Papaya).